The following is a 273-amino-acid chain: 2,3,4,5-tetrahydropyridine-2,6-dicarboxylate N-succinyltransferase (273 aa).

It belongs to the transferase hexapeptide repeat family.

It localises to the cytoplasm. The catalysed reaction is (S)-2,3,4,5-tetrahydrodipicolinate + succinyl-CoA + H2O = (S)-2-succinylamino-6-oxoheptanedioate + CoA. It participates in amino-acid biosynthesis; L-lysine biosynthesis via DAP pathway; LL-2,6-diaminopimelate from (S)-tetrahydrodipicolinate (succinylase route): step 1/3. The chain is 2,3,4,5-tetrahydropyridine-2,6-dicarboxylate N-succinyltransferase from Acinetobacter baumannii (strain AB307-0294).